The sequence spans 492 residues: Pentatricopeptide repeat-containing protein At4g21705, mitochondrial (492 aa).

The transit peptide at 1–17 (MNILRRIPANLIASRYY) directs the protein to the mitochondrion. PPR repeat units lie at residues 125-159 (NDKTYGALLNCYVRQQNVEKSLLHFEKMKEMGFVT), 160-194 (SSLTYNNIMCLYTNIGQHEKVPKVLEEMKEENVAP), 195-225 (DNYSYRICINAFGAMYDLERIGGTLRDMERR), 231-261 (DWNTYAVAAKFYIDGGDCDRAVELLKMSENR), 266-296 (DGEGYNHLITLYARLGKKIEVLRLWDLEKDV), 301-335 (INQDYLTVLQSLVKIDALVEAEEVLTEWKSSGNCY), 336-370 (DFRVPNTVIRGYIGKSMEEKAEAMLEDLARRGKAT), and 371-405 (TPESWELVATAYAEKGTLENAFKCMKTALGVEVGS).

Belongs to the PPR family. P subfamily.

It localises to the mitochondrion. This chain is Pentatricopeptide repeat-containing protein At4g21705, mitochondrial, found in Arabidopsis thaliana (Mouse-ear cress).